A 421-amino-acid chain; its full sequence is Acetate kinase (421 aa).

N7 provides a ligand contact to Mg(2+). K14 contacts ATP. Substrate is bound at residue R91. Residue D148 is the Proton donor/acceptor of the active site. ATP-binding positions include 208 to 212 and 283 to 285; these read HIGNG and DRR. Residue E387 participates in Mg(2+) binding.

It belongs to the acetokinase family. In terms of assembly, homodimer. Requires Mg(2+) as cofactor. The cofactor is Mn(2+).

The protein localises to the cytoplasm. The enzyme catalyses acetate + ATP = acetyl phosphate + ADP. Its pathway is metabolic intermediate biosynthesis; acetyl-CoA biosynthesis; acetyl-CoA from acetate: step 1/2. Its function is as follows. Catalyzes the formation of acetyl phosphate from acetate and ATP. Can also catalyze the reverse reaction. The protein is Acetate kinase of Geobacter metallireducens (strain ATCC 53774 / DSM 7210 / GS-15).